We begin with the raw amino-acid sequence, 215 residues long: 3-isopropylmalate dehydratase small subunit (215 aa).

It belongs to the LeuD family. LeuD type 1 subfamily. In terms of assembly, heterodimer of LeuC and LeuD.

It catalyses the reaction (2R,3S)-3-isopropylmalate = (2S)-2-isopropylmalate. The protein operates within amino-acid biosynthesis; L-leucine biosynthesis; L-leucine from 3-methyl-2-oxobutanoate: step 2/4. Functionally, catalyzes the isomerization between 2-isopropylmalate and 3-isopropylmalate, via the formation of 2-isopropylmaleate. The chain is 3-isopropylmalate dehydratase small subunit from Xylella fastidiosa (strain 9a5c).